Here is a 243-residue protein sequence, read N- to C-terminus: 6-carboxyhexanoate--CoA ligase (243 aa).

It belongs to the BioW family. Homodimer. Mg(2+) is required as a cofactor.

The catalysed reaction is heptanedioate + ATP + CoA = 6-carboxyhexanoyl-CoA + AMP + diphosphate. Its pathway is metabolic intermediate metabolism; pimeloyl-CoA biosynthesis; pimeloyl-CoA from pimelate: step 1/1. Catalyzes the transformation of pimelate into pimeloyl-CoA with concomitant hydrolysis of ATP to AMP. The chain is 6-carboxyhexanoate--CoA ligase from Corynebacterium pseudotuberculosis (strain FRC41).